A 199-amino-acid polypeptide reads, in one-letter code: Thymidylate kinase (199 aa).

7–14 (GTEGVGKT) contributes to the ATP binding site.

It belongs to the thymidylate kinase family.

The catalysed reaction is dTMP + ATP = dTDP + ADP. In terms of biological role, phosphorylation of dTMP to form dTDP in both de novo and salvage pathways of dTTP synthesis. The protein is Thymidylate kinase of Acinetobacter baumannii (strain ATCC 17978 / DSM 105126 / CIP 53.77 / LMG 1025 / NCDC KC755 / 5377).